Reading from the N-terminus, the 355-residue chain is Phosphate acyltransferase (355 aa).

It belongs to the PlsX family. Homodimer. Probably interacts with PlsY.

Its subcellular location is the cytoplasm. The enzyme catalyses a fatty acyl-[ACP] + phosphate = an acyl phosphate + holo-[ACP]. Its pathway is lipid metabolism; phospholipid metabolism. Catalyzes the reversible formation of acyl-phosphate (acyl-PO(4)) from acyl-[acyl-carrier-protein] (acyl-ACP). This enzyme utilizes acyl-ACP as fatty acyl donor, but not acyl-CoA. The sequence is that of Phosphate acyltransferase from Azorhizobium caulinodans (strain ATCC 43989 / DSM 5975 / JCM 20966 / LMG 6465 / NBRC 14845 / NCIMB 13405 / ORS 571).